We begin with the raw amino-acid sequence, 567 residues long: Oxygen-dependent choline dehydrogenase (567 aa).

4-33 (DYIIIGAGSAGNVLAARLTEDADVTVLLLE) serves as a coordination point for FAD. Catalysis depends on histidine 473, which acts as the Proton acceptor.

Belongs to the GMC oxidoreductase family. The cofactor is FAD.

It catalyses the reaction choline + A = betaine aldehyde + AH2. The catalysed reaction is betaine aldehyde + NAD(+) + H2O = glycine betaine + NADH + 2 H(+). It functions in the pathway amine and polyamine biosynthesis; betaine biosynthesis via choline pathway; betaine aldehyde from choline (cytochrome c reductase route): step 1/1. Involved in the biosynthesis of the osmoprotectant glycine betaine. Catalyzes the oxidation of choline to betaine aldehyde and betaine aldehyde to glycine betaine at the same rate. In Yersinia pestis (strain Pestoides F), this protein is Oxygen-dependent choline dehydrogenase.